A 138-amino-acid polypeptide reads, in one-letter code: Large ribosomal subunit protein uL16 (138 aa).

Over residues 1-19 (MLIPKRVKYRRQHRPHRSG) the composition is skewed to basic residues. The disordered stretch occupies residues 1–24 (MLIPKRVKYRRQHRPHRSGVSKGG).

Belongs to the universal ribosomal protein uL16 family. Part of the 50S ribosomal subunit.

Binds 23S rRNA and is also seen to make contacts with the A and possibly P site tRNAs. The sequence is that of Large ribosomal subunit protein uL16 from Corynebacterium jeikeium (strain K411).